The primary structure comprises 510 residues: GTPase Der (510 aa).

EngA-type G domains are found at residues 4–168 (PVVA…AEKM) and 222–395 (IKIA…ACAT). GTP is bound by residues 10-17 (GRPNVGKS), 57-61 (DTGGI), 120-123 (NKTD), 228-235 (GRPNVGKS), 275-279 (DTAGV), and 340-343 (NKWD). The KH-like domain occupies 396-480 (QKMTTSMLTR…PIRLLFQEGN (85 aa)).

This sequence belongs to the TRAFAC class TrmE-Era-EngA-EngB-Septin-like GTPase superfamily. EngA (Der) GTPase family. As to quaternary structure, associates with the 50S ribosomal subunit.

Its function is as follows. GTPase that plays an essential role in the late steps of ribosome biogenesis. The polypeptide is GTPase Der (Pasteurella multocida (strain Pm70)).